We begin with the raw amino-acid sequence, 368 residues long: Phosphate acyltransferase (368 aa).

Residues 337-368 are disordered; it reads LGEGEHNAGGAGHASPAAGHHAEPSAAQSSKA. The segment covering 349-368 has biased composition (low complexity); that stretch reads HASPAAGHHAEPSAAQSSKA.

Belongs to the PlsX family. In terms of assembly, homodimer. Probably interacts with PlsY.

The protein resides in the cytoplasm. It catalyses the reaction a fatty acyl-[ACP] + phosphate = an acyl phosphate + holo-[ACP]. It participates in lipid metabolism; phospholipid metabolism. In terms of biological role, catalyzes the reversible formation of acyl-phosphate (acyl-PO(4)) from acyl-[acyl-carrier-protein] (acyl-ACP). This enzyme utilizes acyl-ACP as fatty acyl donor, but not acyl-CoA. The sequence is that of Phosphate acyltransferase from Burkholderia lata (strain ATCC 17760 / DSM 23089 / LMG 22485 / NCIMB 9086 / R18194 / 383).